The sequence spans 273 residues: Putative pyruvate, phosphate dikinase regulatory protein 2 (273 aa).

An ADP-binding site is contributed by glycine 151–threonine 158.

This sequence belongs to the pyruvate, phosphate/water dikinase regulatory protein family. PDRP subfamily.

The catalysed reaction is N(tele)-phospho-L-histidyl/L-threonyl-[pyruvate, phosphate dikinase] + ADP = N(tele)-phospho-L-histidyl/O-phospho-L-threonyl-[pyruvate, phosphate dikinase] + AMP + H(+). It carries out the reaction N(tele)-phospho-L-histidyl/O-phospho-L-threonyl-[pyruvate, phosphate dikinase] + phosphate + H(+) = N(tele)-phospho-L-histidyl/L-threonyl-[pyruvate, phosphate dikinase] + diphosphate. Functionally, bifunctional serine/threonine kinase and phosphorylase involved in the regulation of the pyruvate, phosphate dikinase (PPDK) by catalyzing its phosphorylation/dephosphorylation. In Syntrophomonas wolfei subsp. wolfei (strain DSM 2245B / Goettingen), this protein is Putative pyruvate, phosphate dikinase regulatory protein 2.